We begin with the raw amino-acid sequence, 473 residues long: Lactococcin A secretion protein LcnD-like (473 aa).

The Cytoplasmic portion of the chain corresponds to Met-1–Ser-21. The chain crosses the membrane as a helical span at residues Thr-22 to Lys-44. Topologically, residues Glu-45–Ser-473 are extracellular.

It belongs to the membrane fusion protein (MFP) (TC 8.A.1) family.

It is found in the cell membrane. Its function is as follows. Involved in the secretion of a lactococcin. The sequence is that of Lactococcin A secretion protein LcnD-like (lcnD) from Lactococcus lactis subsp. lactis (strain IL1403) (Streptococcus lactis).